A 601-amino-acid chain; its full sequence is ATP-dependent lipid A-core flippase (601 aa).

An ABC transmembrane type-1 domain is found at 28 to 328 (LLSVVGLIVY…LTRVNAEFQR (301 aa)). Transmembrane regions (helical) follow at residues 32–52 (VGLI…GPFI), 81–101 (VLLM…FANF), 160–180 (ALIS…LMFY), 183–203 (WKLS…ITIV), 267–287 (AVSQ…VLYA), and 296–316 (DLTA…LQPI). Residues 360-597 (LRFDNVSFSY…GGMYAKLYQM (238 aa)) enclose the ABC transporter domain. Residue 394 to 401 (GRSGSGKS) participates in ATP binding.

Belongs to the ABC transporter superfamily. Lipid exporter (TC 3.A.1.106) family. As to quaternary structure, homodimer.

It localises to the cell inner membrane. The catalysed reaction is ATP + H2O + lipid A-core oligosaccharideSide 1 = ADP + phosphate + lipid A-core oligosaccharideSide 2.. In terms of biological role, involved in lipopolysaccharide (LPS) biosynthesis. Translocates lipid A-core from the inner to the outer leaflet of the inner membrane. Transmembrane domains (TMD) form a pore in the inner membrane and the ATP-binding domain (NBD) is responsible for energy generation. This is ATP-dependent lipid A-core flippase from Shewanella oneidensis (strain ATCC 700550 / JCM 31522 / CIP 106686 / LMG 19005 / NCIMB 14063 / MR-1).